Reading from the N-terminus, the 910-residue chain is Epithelial discoidin domain-containing receptor 1 (910 aa).

The N-terminal stretch at 1–19 is a signal peptide; that stretch reads MGTGTLSSLLLLLLLVTIG. The Extracellular segment spans residues 22–414; the sequence is DMKGHFDPAK…VAKAEGSPTA (393 aa). The region spanning 32-186 is the F5/8 type C domain; that stretch reads CRYALGMQDR…VCLRVELYGC (155 aa). Intrachain disulfides connect cysteine 32/cysteine 186 and cysteine 75/cysteine 178. Residues 193-368 are DS-like domain; it reads LSYTAPVGQT…LFSEISFISD (176 aa). Ca(2+) contacts are provided by asparagine 212, glutamine 231, aspartate 234, valine 236, tyrosine 254, and tyrosine 256. An N-linked (GlcNAc...) asparagine glycan is attached at asparagine 212. Asparagine 261 is a glycosylation site (N-linked (GlcNAc...) asparagine). An intrachain disulfide couples cysteine 304 to cysteine 349. Residues serine 361 and glutamate 362 each coordinate Ca(2+). Asparagine 371 and asparagine 391 each carry an N-linked (GlcNAc...) asparagine glycan. Residues 415–435 form a helical membrane-spanning segment; that stretch reads ILIGCLVAIILLLLLIIALML. The Cytoplasmic portion of the chain corresponds to 436 to 910; it reads WRLHWRRLLS…FLADDALNTV (475 aa). A disordered region spans residues 467-494; the sequence is ILINNRPGPREPPPYQEPRPRGTPTHSA. The short motif at 478-481 is the PPxY motif element; that stretch reads PPPY. Phosphotyrosine; by autocatalysis occurs at positions 481, 510, and 517. The Protein kinase domain maps to 607-902; the sequence is LRFKEKLGEG…PPFSQLHRFL (296 aa). ATP is bound by residues 613 to 621 and lysine 652; that span reads LGEGQFGEV. Tyrosine 737 carries the post-translational modification Phosphotyrosine; by autocatalysis. The Proton acceptor role is filled by aspartate 763. Tyrosine 789, tyrosine 793, and tyrosine 794 each carry phosphotyrosine; by autocatalysis.

This sequence belongs to the protein kinase superfamily. Tyr protein kinase family. Insulin receptor subfamily. As to quaternary structure, homodimer. Interacts (via PPxY motif) with WWC1 (via WW domains) in a collagen-regulated manner. Forms a tripartite complex with WWC1 and PRKCZ, but predominantly in the absence of collagen. Interacts (tyrosine phosphorylated) with SHC1. Interacts with SRC. Interacts with MYH9. Interacts with CDH1. Interacts with PTPN11. Interacts with NCK2. Post-translationally, autophosphorylated in response to fibrillar collagen binding. Various embryonic and adult tissues; also proliferative zones of the developing brain; hippocampal neurons.

Its subcellular location is the cell membrane. It carries out the reaction L-tyrosyl-[protein] + ATP = O-phospho-L-tyrosyl-[protein] + ADP + H(+). Its function is as follows. Tyrosine kinase that functions as a cell surface receptor for fibrillar collagen and regulates cell attachment to the extracellular matrix, remodeling of the extracellular matrix, cell migration, differentiation, survival and cell proliferation. Collagen binding triggers a signaling pathway that involves SRC and leads to the activation of MAP kinases. Regulates remodeling of the extracellular matrix by up-regulation of the matrix metalloproteinases MMP2, MMP7 and MMP9, and thereby facilitates cell migration and wound healing. Promotes smooth muscle cell migration, and thereby contributes to arterial wound healing. Also plays a role in tumor cell invasion. Phosphorylates PTPN11. Required for normal blastocyst implantation during pregnancy, for normal mammary gland differentiation and normal lactation. Required for normal ear morphology and normal hearing. The chain is Epithelial discoidin domain-containing receptor 1 (Ddr1) from Rattus norvegicus (Rat).